The following is a 399-amino-acid chain: Zinc finger HIT domain-containing protein 2 (399 aa).

Residue Met1 is modified to N-acetylmethionine. Positions 7, 10, 22, 25, 30, 34, 38, and 41 each coordinate Zn(2+). Residues 7–41 (CGFCPAGEALPARYTCPRCNAPYCSLRCYRAHGAC) form an HIT-type zinc finger. Disordered stretches follow at residues 70-97 (RLRE…GLSG) and 152-175 (AEPE…AEPF). Residues 86 to 96 (LGPGARPGGLS) are compositionally biased toward gly residues. Thr161 bears the Phosphothreonine mark.

In terms of assembly, interacts (via HIT-type zinc finger) with RUVBL2 in the presence of ATP or ADP; shows a stronger interaction in the presence of ADP. As to expression, low expression in most tissues; highly expressed in testis; particularly in seminiferous tubules.

In terms of biological role, may act as a bridging factor mediating the interaction between the R2TP/Prefoldin-like (R2TP/PFDL) complex and U5 small nuclear ribonucleoprotein (U5 snRNP). Required for the interaction of R2TP complex subunit RPAP3 and prefoldin-like subunit URI1 with U5 snRNP proteins EFTUD2 and PRPF8. May play a role in regulating the composition of the U5 snRNP complex. This is Zinc finger HIT domain-containing protein 2 (Znhit2) from Mus musculus (Mouse).